Consider the following 218-residue polypeptide: Small ribosomal subunit protein uS7m (218 aa).

The transit peptide at 1–19 (MSLLGRIAEKTSRLSCLRL) directs the protein to the mitochondrion.

The protein belongs to the universal ribosomal protein uS7 family. Component of the mitochondrial ribosome small subunit (28S) which comprises a 12S rRNA and about 30 distinct proteins.

It localises to the mitochondrion. The protein is Small ribosomal subunit protein uS7m (mRpS7) of Drosophila melanogaster (Fruit fly).